Reading from the N-terminus, the 543-residue chain is MSPTKTQNSAEENIRAELGLSAEVVTIRRNAPAALLYEDALKERDTAISNAGALIAYSGDKTGRSPRDKRIVEEETSKDNVWWGPVNKPCSERTWEINRERAADYLRTRDHIYIVDAYAGWDPRYRIKVRVVCARAYHALFMTNMLIRPSKEELENFGEPDFTVWNAGQFPANTHTSGMTSKTTVEINFKQMEMVILGTEYAGEMKKGIFTVMFYLMPVNHNVLTLHSSANQGIQDNDVTLFFGLSGTGKTTLSADPHRLLIGDDEHCWSDHGVFNIEGGCYAKCLGLSAEKEPEIFNAIKFGSVLENIIYDPNTREVDYEDSTITENTRCAYPIEYIPSAKIPCLADHHPKNIVLLTCDASGVLPPVSKLTPDQVMYHFISGYTSKMAGTEQGVTEPEATFSSCFGQPFLSLHPMKYATMLAEKMAEHNANAWLINTGWTGSSYVAGGKRCPLKYTRAILDAIHDGSLAKEEYEVLPIFNLQIPKAVGDKVPASLLNPSKNWAEGEAKYTSNVKSLANLFVENFKTYQDKATEQVLAAGPQL.

Position 244–251 (Gly244–Thr251) interacts with ATP.

This sequence belongs to the phosphoenolpyruvate carboxykinase (ATP) family.

The enzyme catalyses oxaloacetate + ATP = phosphoenolpyruvate + ADP + CO2. The protein operates within carbohydrate biosynthesis; gluconeogenesis. This Kluyveromyces lactis (strain ATCC 8585 / CBS 2359 / DSM 70799 / NBRC 1267 / NRRL Y-1140 / WM37) (Yeast) protein is Phosphoenolpyruvate carboxykinase (ATP) (PCK1).